The sequence spans 254 residues: 2-dehydro-3-deoxy-D-gluconate 5-dehydrogenase (254 aa).

16–40 (LVTGPGTGIGQGIAKALAGAGADII) serves as a coordination point for NAD(+). Ser146 lines the substrate pocket. Tyr159 serves as the catalytic Proton acceptor.

This sequence belongs to the short-chain dehydrogenases/reductases (SDR) family.

It catalyses the reaction 2-dehydro-3-deoxy-D-gluconate + NAD(+) = 3-deoxy-D-glycero-2,5-hexodiulosonate + NADH + H(+). It functions in the pathway glycan metabolism; pectin degradation; 2-dehydro-3-deoxy-D-gluconate from pectin: step 5/5. In terms of biological role, catalyzes the reduction of 2,5-diketo-3-deoxygluconate (DKII or 4,6-dihydroxy-2,5-dioxohexanoate) into 2-keto-3-deoxygluconate (KDG or 2-dehydro-3-deoxygluconate) with a concomitant oxidation of NADH. The protein is 2-dehydro-3-deoxy-D-gluconate 5-dehydrogenase (kduD) of Bacillus subtilis (strain 168).